Reading from the N-terminus, the 223-residue chain is Uridylate kinase (223 aa).

An ATP-binding site is contributed by 9-10; sequence GS. Glycine 42 lines the UMP pocket. ATP is bound by residues glycine 43 and arginine 47. UMP is bound by residues aspartate 64 and 112 to 118; that span reads VSPGQTT. Threonine 138, tyrosine 144, and aspartate 147 together coordinate ATP.

It belongs to the UMP kinase family. As to quaternary structure, homohexamer.

It localises to the cytoplasm. The enzyme catalyses UMP + ATP = UDP + ADP. The protein operates within pyrimidine metabolism; CTP biosynthesis via de novo pathway; UDP from UMP (UMPK route): step 1/1. Its activity is regulated as follows. Inhibited by UTP. Its function is as follows. Catalyzes the reversible phosphorylation of UMP to UDP. The chain is Uridylate kinase from Methanothrix thermoacetophila (strain DSM 6194 / JCM 14653 / NBRC 101360 / PT) (Methanosaeta thermophila).